Consider the following 703-residue polypeptide: Polyribonucleotide nucleotidyltransferase (703 aa).

Mg(2+) is bound by residues aspartate 489 and aspartate 495. Residues 556 to 615 enclose the KH domain; it reads PTMIAMKIDTDKIRDVIGKGGATIRAICEETKASIDIEDDGSIKIFGETKEAAEAARQRV. An S1 motif domain is found at 625-693; the sequence is GKIYVGKVER…NRGRIKLSIK (69 aa).

The protein belongs to the polyribonucleotide nucleotidyltransferase family. As to quaternary structure, component of the RNA degradosome, which is a multiprotein complex involved in RNA processing and mRNA degradation. Mg(2+) serves as cofactor.

The protein resides in the cytoplasm. The catalysed reaction is RNA(n+1) + phosphate = RNA(n) + a ribonucleoside 5'-diphosphate. Its function is as follows. Involved in mRNA degradation. Catalyzes the phosphorolysis of single-stranded polyribonucleotides processively in the 3'- to 5'-direction. This Pseudomonas fluorescens (strain ATCC BAA-477 / NRRL B-23932 / Pf-5) protein is Polyribonucleotide nucleotidyltransferase.